We begin with the raw amino-acid sequence, 126 residues long: UPF0047 protein AF_2050 (126 aa).

It belongs to the UPF0047 family.

The polypeptide is UPF0047 protein AF_2050 (Archaeoglobus fulgidus (strain ATCC 49558 / DSM 4304 / JCM 9628 / NBRC 100126 / VC-16)).